The sequence spans 308 residues: Secreted frizzled-related protein 1 (308 aa).

The signal sequence occupies residues 1–25 (MGGGRWAAAGALLALAAGLLAAGSA). The region spanning 47 to 163 (TKPPQCVDIP…FPEGDVCIAM (117 aa)) is the FZ domain. Cystine bridges form between cysteine 52-cysteine 115, cysteine 62-cysteine 108, cysteine 99-cysteine 134, cysteine 123-cysteine 160, and cysteine 127-cysteine 151. Asparagine 167 is a glycosylation site (N-linked (GlcNAc...) asparagine). 3 disulfides stabilise this stretch: cysteine 180/cysteine 250, cysteine 183/cysteine 252, and cysteine 197/cysteine 300. The region spanning 180-300 (CPPCDNELKS…FMKKMKNHEC (121 aa)) is the NTR domain.

Belongs to the secreted frizzled-related protein (sFRP) family. As to quaternary structure, interacts with WNT1, WNT2, WNT4, WNT8, MYOC and FRZD6. As to expression, highest levels in aortic endothelium, heart, spleen and eye. Lower levels in lung, brain and kidney. Weak expression in liver, skeletal muscle and the medial layer of the aorta. In the cortical brain, localized to neurons and small blood vessels. In the retina, localized to the inner and outer nuclear layers with high expression in the neuronal cell bodies. In the heart, restricted to myocytes. In lung, highest expression found in the epithelium of terminal bronchioles. In kidney, localized to the epithelium of collecting ducts of the medulla and, in spleen, expression restricted to the red pulp in cells associated with the sinuses.

It localises to the secreted. Soluble frizzled-related proteins (sFRPS) function as modulators of Wnt signaling through direct interaction with Wnts. They have a role in regulating cell growth and differentiation in specific cell types. SFRP1 decreases intracellular beta-catenin levels. Has antiproliferative effects on vascular cells, in vitro and in vivo, and can induce, in vivo, an angiogenic response. In vascular cell cycle, delays the G1 phase and entry into the S phase. In kidney development, inhibits tubule formation and bud growth in metanephroi. Inhibits WNT1/WNT4-mediated TCF-dependent transcription. The protein is Secreted frizzled-related protein 1 (SFRP1) of Bos taurus (Bovine).